Reading from the N-terminus, the 296-residue chain is Probable alpha-L-glutamate ligase (296 aa).

The ATP-grasp domain maps to 104 to 287; the sequence is LQLLARQGID…IATLMITFIE (184 aa). ATP is bound by residues Lys141, 178–179, Asp187, and 211–213; these read EF and RSN. Positions 248, 260, and 262 each coordinate Mg(2+). Mn(2+) is bound by residues Asp248, Glu260, and Asn262.

The protein belongs to the RimK family. Requires Mg(2+) as cofactor. Mn(2+) serves as cofactor.

The protein is Probable alpha-L-glutamate ligase of Sodalis glossinidius (strain morsitans).